The primary structure comprises 149 residues: UPF0179 protein rrnAC1064 (149 aa).

It belongs to the UPF0179 family.

The sequence is that of UPF0179 protein rrnAC1064 from Haloarcula marismortui (strain ATCC 43049 / DSM 3752 / JCM 8966 / VKM B-1809) (Halobacterium marismortui).